A 508-amino-acid chain; its full sequence is Histidine ammonia-lyase (508 aa).

The segment at residues 139 to 141 (ASG) is a cross-link (5-imidazolinone (Ala-Gly)). A 2,3-didehydroalanine (Ser) modification is found at Ser-140.

Belongs to the PAL/histidase family. Contains an active site 4-methylidene-imidazol-5-one (MIO), which is formed autocatalytically by cyclization and dehydration of residues Ala-Ser-Gly.

Its subcellular location is the cytoplasm. It carries out the reaction L-histidine = trans-urocanate + NH4(+). It participates in amino-acid degradation; L-histidine degradation into L-glutamate; N-formimidoyl-L-glutamate from L-histidine: step 1/3. In Acidiphilium cryptum (strain JF-5), this protein is Histidine ammonia-lyase.